We begin with the raw amino-acid sequence, 284 residues long: Homeobox protein six1 (284 aa).

Positions Gly124–Glu183 form a DNA-binding region, homeobox. Residues Val168–Ser230 form a disordered region. Positions Asp179–Thr190 are enriched in basic and acidic residues. Low complexity predominate over residues Glu191–Gln202.

The protein belongs to the SIX/Sine oculis homeobox family.

The protein localises to the nucleus. The protein resides in the cytoplasm. Its function is as follows. Transcription factor that is involved in the regulation of cell proliferation, apoptosis and embryonic development. Depending on context, functions as a transcriptional repressor or activator. Required for the normal formation of pre-placodal ectoderm. In Xenopus laevis (African clawed frog), this protein is Homeobox protein six1 (six1).